A 1067-amino-acid polypeptide reads, in one-letter code: Kinesin-like protein KIF11-A (1067 aa).

The region spanning 18-359 is the Kinesin motor domain; that stretch reads NIQVVVRCRP…LDYASRAKNI (342 aa). 105 to 112 provides a ligand contact to ATP; sequence GQTGTGKT. Coiled-coil stretches lie at residues 365 to 480, 692 to 721, and 882 to 915; these read VNQK…QEAF, DSSS…HSEG, and QAQE…QVQS. Thr-937 is subject to Phosphothreonine; by CDK1. Residue Ser-1046 is modified to Phosphoserine; by NEK6.

This sequence belongs to the TRAFAC class myosin-kinesin ATPase superfamily. Kinesin family. BimC subfamily. Heterotetramer of two heavy and two light chains. Interacts with aurka. Post-translationally, phosphorylation of Thr-937 during mitosis controls the association of this protein with the spindle apparatus. In terms of processing, a subset of this protein primarily localized at the spindle pole is phosphorylated by NEK6 during mitosis. Phosphorylated on a serine residue by aurka. Highly expressed in unfertilized eggs, especially in the germinal vesicle and in the radial yolk-poor channels. Also present in testis.

It localises to the cytoplasm. Its subcellular location is the cytoskeleton. The protein localises to the spindle pole. Its function is as follows. Plus end-directed motor protein required for establishing a bipolar spindle. Associates with both interphase and spindle microtubules. May be involved in nuclear divisions taking place during the development of unfertilized eggs. Required in non-mitotic cells for transport of secretory proteins from the Golgi complex to the cell surface. The protein is Kinesin-like protein KIF11-A (kif11-a) of Xenopus laevis (African clawed frog).